The sequence spans 357 residues: UPF0283 membrane protein BMEA_A1074 (357 aa).

Residues 1–36 (MSDKTPRKPTAFRLEQPARVSAASEQEEPRRPRAVK) form a disordered region. Residues 27–36 (EEPRRPRAVK) are compositionally biased toward basic and acidic residues. The next 2 helical transmembrane spans lie at 78–98 (ILFG…TEDL) and 109–129 (LGWT…AIIL).

This sequence belongs to the UPF0283 family.

The protein resides in the cell inner membrane. The chain is UPF0283 membrane protein BMEA_A1074 from Brucella melitensis biotype 2 (strain ATCC 23457).